A 619-amino-acid chain; its full sequence is DNA mismatch repair protein MutL (619 aa).

Belongs to the DNA mismatch repair MutL/HexB family.

In terms of biological role, this protein is involved in the repair of mismatches in DNA. It is required for dam-dependent methyl-directed DNA mismatch repair. May act as a 'molecular matchmaker', a protein that promotes the formation of a stable complex between two or more DNA-binding proteins in an ATP-dependent manner without itself being part of a final effector complex. In Shewanella frigidimarina (strain NCIMB 400), this protein is DNA mismatch repair protein MutL.